A 339-amino-acid chain; its full sequence is Dihydroorotate dehydrogenase (quinone) (339 aa).

Residues 62-66 (AGMDK) and threonine 86 contribute to the FMN site. Lysine 66 serves as a coordination point for substrate. Residue 111–115 (NRMGF) coordinates substrate. Asparagine 139 and asparagine 172 together coordinate FMN. Asparagine 172 lines the substrate pocket. Residue serine 175 is the Nucleophile of the active site. Asparagine 177 contacts substrate. Positions 217 and 245 each coordinate FMN. Substrate is bound at residue 246-247 (NT). FMN contacts are provided by residues glycine 268, glycine 297, and 318–319 (FS).

Belongs to the dihydroorotate dehydrogenase family. Type 2 subfamily. As to quaternary structure, monomer. The cofactor is FMN.

The protein localises to the cell membrane. The enzyme catalyses (S)-dihydroorotate + a quinone = orotate + a quinol. It functions in the pathway pyrimidine metabolism; UMP biosynthesis via de novo pathway; orotate from (S)-dihydroorotate (quinone route): step 1/1. In terms of biological role, catalyzes the conversion of dihydroorotate to orotate with quinone as electron acceptor. This is Dihydroorotate dehydrogenase (quinone) from Shewanella halifaxensis (strain HAW-EB4).